The sequence spans 388 residues: Acyl-CoA dehydrogenase fadE12 (388 aa).

Belongs to the acyl-CoA dehydrogenase family. Requires FAD as cofactor.

The enzyme catalyses a 2,3-saturated acyl-CoA + A = a 2,3-dehydroacyl-CoA + AH2. The chain is Acyl-CoA dehydrogenase fadE12 (fadE12) from Mycobacterium tuberculosis (strain CDC 1551 / Oshkosh).